Here is a 161-residue protein sequence, read N- to C-terminus: MEYNTSELCDTYIDVVDVVEPMFSNYGGCNSFGGSISTIKCFEDNGLIAEALQQDGEGKVLLVDGGGSLRRALLDASIAQLAVDNKWEGIIIYGSVRDVDALEDLDIGIQALASIPVGADENSVGELEIPVNFGGVTFLPLDHVYADNTGIILSPEPLDME.

The protein belongs to the RraA family. In terms of assembly, homotrimer. Binds to both RNA-binding sites in the C-terminal region of Rne and to RhlB.

It is found in the cytoplasm. Functionally, globally modulates RNA abundance by binding to RNase E (Rne) and regulating its endonucleolytic activity. Can modulate Rne action in a substrate-dependent manner by altering the composition of the degradosome. Modulates RNA-binding and helicase activities of the degradosome. The chain is Regulator of ribonuclease activity A from Shewanella sediminis (strain HAW-EB3).